We begin with the raw amino-acid sequence, 283 residues long: 4-diphosphocytidyl-2-C-methyl-D-erythritol kinase (283 aa).

Lysine 10 is a catalytic residue. Residue 99 to 109 coordinates ATP; the sequence is PMGGGLGGGSS. Aspartate 141 is an active-site residue.

The protein belongs to the GHMP kinase family. IspE subfamily. As to quaternary structure, homodimer.

The enzyme catalyses 4-CDP-2-C-methyl-D-erythritol + ATP = 4-CDP-2-C-methyl-D-erythritol 2-phosphate + ADP + H(+). It functions in the pathway isoprenoid biosynthesis; isopentenyl diphosphate biosynthesis via DXP pathway; isopentenyl diphosphate from 1-deoxy-D-xylulose 5-phosphate: step 3/6. Functionally, catalyzes the phosphorylation of the position 2 hydroxy group of 4-diphosphocytidyl-2C-methyl-D-erythritol. This is 4-diphosphocytidyl-2-C-methyl-D-erythritol kinase from Escherichia coli O81 (strain ED1a).